The primary structure comprises 260 residues: Indole-3-glycerol phosphate synthase (260 aa).

This sequence belongs to the TrpC family.

It carries out the reaction 1-(2-carboxyphenylamino)-1-deoxy-D-ribulose 5-phosphate + H(+) = (1S,2R)-1-C-(indol-3-yl)glycerol 3-phosphate + CO2 + H2O. It functions in the pathway amino-acid biosynthesis; L-tryptophan biosynthesis; L-tryptophan from chorismate: step 4/5. This is Indole-3-glycerol phosphate synthase from Koribacter versatilis (strain Ellin345).